Here is a 390-residue protein sequence, read N- to C-terminus: Pyruvate dehydrogenase E1 component subunit alpha, somatic form, mitochondrial (390 aa).

A mitochondrion-targeting transit peptide spans Met-1–Asn-29. Lys-63 is subject to N6-acetyllysine; alternate. Lys-63 carries the post-translational modification N6-succinyllysine; alternate. Positions 92, 118, 119, 157, 165, 167, 196, 197, 198, 225, and 227 each coordinate pyruvate. The thiamine diphosphate site is built by Tyr-118 and Arg-119. Thiamine diphosphate-binding residues include Gly-165, Val-167, Asp-196, Gly-197, Ala-198, and Asn-225. Position 196 (Asp-196) interacts with Mg(2+). Mg(2+)-binding residues include Asn-225 and Tyr-227. Ser-232 is subject to Phosphoserine; by PDK1. Lys-244 carries the N6-acetyllysine; alternate modification. An N6-succinyllysine; alternate modification is found at Lys-244. At Lys-277 the chain carries N6-succinyllysine. His-292 serves as a coordination point for thiamine diphosphate. The residue at position 293 (Ser-293) is a Phosphoserine; by PDK1, PDK2, PDK3 and PDK4. Phosphoserine is present on Ser-295. The residue at position 300 (Ser-300) is a Phosphoserine; by PDK1, PDK2, PDK3 and PDK4. Tyr-301 carries the post-translational modification Phosphotyrosine. The residue at position 313 (Lys-313) is an N6-acetyllysine; alternate. Lys-313 is subject to N6-succinyllysine; alternate. 2 positions are modified to N6-acetyllysine: Lys-321 and Lys-336. Lys-385 carries the post-translational modification N6-succinyllysine.

As to quaternary structure, heterotetramer of two PDHA1 and two PDHB subunits. The heterotetramer interacts with DLAT, and is part of the multimeric pyruvate dehydrogenase complex that contains multiple copies of pyruvate dehydrogenase (E1), dihydrolipoamide acetyltransferase (DLAT, E2) and lipoamide dehydrogenase (DLD, E3). These subunits are bound to an inner core composed of about 48 DLAT and 12 PDHX molecules. Requires thiamine diphosphate as cofactor. Mg(2+) serves as cofactor. Post-translationally, phosphorylation at Ser-232, Ser-293 and Ser-300 by PDK family kinases inactivates the enzyme; for this phosphorylation at a single site is sufficient. Phosphorylation at Ser-293 interferes with access to active site, and thereby inactivates the enzyme. Dephosphorylation at all three sites, i.e. at Ser-232, Ser-293 and Ser-300, is required for reactivation. Acetylation alters the phosphorylation pattern. Deacetylated by SIRT3.

The protein resides in the mitochondrion matrix. The catalysed reaction is N(6)-[(R)-lipoyl]-L-lysyl-[protein] + pyruvate + H(+) = N(6)-[(R)-S(8)-acetyldihydrolipoyl]-L-lysyl-[protein] + CO2. With respect to regulation, pyruvate dehydrogenase activity is inhibited by phosphorylation of PDHA1; it is reactivated by dephosphorylation. In terms of biological role, the pyruvate dehydrogenase complex catalyzes the overall conversion of pyruvate to acetyl-CoA and CO(2), and thereby links the glycolytic pathway to the tricarboxylic cycle. The protein is Pyruvate dehydrogenase E1 component subunit alpha, somatic form, mitochondrial (PDHA1) of Pan troglodytes (Chimpanzee).